The primary structure comprises 459 residues: DNA-binding protein P3A2 (459 aa).

The disordered stretch occupies residues 1-25 (MMISEDISEPSSPDTPFDDSDLLNS).

It belongs to the NRF1/Ewg family.

It is found in the nucleus. Functionally, transcriptional regulator that interacts with specific sites in the control region of the cyIIIa actin gene. Also binds specifically to similar target sites located in the regulatory region of the SM50 gene. In Strongylocentrotus purpuratus (Purple sea urchin), this protein is DNA-binding protein P3A2.